The chain runs to 436 residues: DNA-dependent metalloprotease SPRTN (436 aa).

The 168-residue stretch at 19-186 folds into the SprT-like domain; that stretch reads IRALFLEFND…RTCGGEFVKI (168 aa). Position 85 (His85) interacts with Zn(2+). Glu86 is a catalytic residue. Residues His89 and His104 each contribute to the Zn(2+) site. The tract at residues 184–219 is disordered; the sequence is VKIKEPENYSQKRKRNNDPTKSELGNSSHVKINKGK. An SHP-box motif is present at residues 231–239; it reads FSGTGYKLF. The short motif at 271–277 is the PIP-box element; the sequence is QTDSTFL. The segment at 300–321 is disordered; that stretch reads GSPIKLPSSSNNKSHQDSSKQK. Residues 408 to 435 form a UBZ4-type zinc finger; the sequence is KVCCPVCGTEIFESKINDHLDTCLQNYN. Zn(2+) is bound by residues Cys411, Cys414, His426, and Cys430.

Belongs to the Spartan family. Homodimer. Requires Zn(2+) as cofactor. Autocatalytically cleaved in response to double-stranded DNA-binding: autocatalytic cleavage takes place in trans and leads to inactivation.

The protein localises to the nucleus. It is found in the chromosome. Its activity is regulated as follows. DNA-binding activates the protease activity: single-stranded DNA-binding specifically activates ability to cleave covalent DNA-protein cross-links (DPCs). In contrast, double-stranded DNA-binding specifically activates autocatalytic cleavage, and subsequent inactivation. DNA-dependent metalloendopeptidase that mediates the proteolytic cleavage of covalent DNA-protein cross-links (DPCs) during DNA synthesis, thereby playing a key role in maintaining genomic integrity. DPCs are highly toxic DNA lesions that interfere with essential chromatin transactions, such as replication and transcription, and which are induced by reactive agents, such as UV light or formaldehyde. Associates with the DNA replication machinery and specifically removes DPCs during DNA synthesis. Catalyzes proteolytic cleavage of the hmces DNA-protein cross-link following unfolding by the brip1/fancj helicase. Acts as a pleiotropic protease for DNA-binding proteins cross-linked with DNA, such as top1, top2a, histones H3 and H4. Mediates degradation of DPCs that are not ubiquitinated, while it is not able to degrade ubiquitinated DPCs. SPRTN activation requires polymerase collision with DPCs followed by helicase bypass of DPCs. May also act as a 'reader' of ubiquitinated pcna: facilitates chromatin association of rad18 and is required for efficient pcna monoubiquitination, promoting a feed-forward loop to enhance pcna ubiquitination and translesion DNA synthesis. Acts as a regulator of translesion DNA synthesis by recruiting vcp/p97 to sites of DNA damage. This Xenopus tropicalis (Western clawed frog) protein is DNA-dependent metalloprotease SPRTN.